The primary structure comprises 383 residues: Multidrug resistance protein MexA (383 aa).

Residues 1-23 (MQRTPAMRVLVPALLVAISALSG) form the signal peptide. Cys24 carries N-palmitoyl cysteine lipidation. A lipid anchor (S-diacylglycerol cysteine) is attached at Cys24. A coiled-coil region spans residues 97–151 (ATYEADYQSAQANLASTQEQAQRYKLLVADQAVSKQQYADANAAYLQSKAAVEQA).

The protein belongs to the membrane fusion protein (MFP) (TC 8.A.1) family. As to quaternary structure, component of the MexAB-OprM multidrug efflux complex, composed of six MexA subunits forming a hexameric tube, binding to a MexB trimer, which interact with the trimeric OprM outer membrane channel protein. OprM is thought to not directly contact MexB; instead, MexA joins MexB and OprM by forming a funnel-like hexamer anchored to the inner membrane. MexA may initially form a hexameric ring complex with MexB prior to OprM, then OprM undergoes a conformational change as it contacts MexA, allowing the periplasmic gate to open. It is thought that, under high intracellular substrate concentration, MexB ejects substrate into the tunnel formed by MexA-OprM; as the substrate level declines, conformational changes in MexB cause efflux to reduce and stop and the complex shifts to the closed state. MexB subunit acts as a substrate:proton antiporter and activity is enhanced significantly when in complex with MexA and OprM, in vitro.

The protein localises to the cell inner membrane. Its activity is regulated as follows. Export of antibiotics and solvents is dramatically decreased in the presence of the protonophore carbonyl cyanide m-chlorophenylhydrazone (CCCP), therefore may be driven by a proton gradient. Antibiotic efflux is inhibited by pyridopyrimidine derivatives, such as ABI-PP, acting by binding to a hydrophobic pocket in MexB. Functionally, the periplasmic linker component of the MexAB-OprM efflux system that confers multidrug resistance. Functions as the major efflux pump for n-hexane and p-xylene efflux. Has been shown in one study to be involved in the active efflux of the autoinducer N-(3-oxododecanoyl) homoserine lactone, thereby playing an indirect role in quorum-sensing; but has been shown in another study not to be involved in efflux of this autoinducer. Over-expression of the pump increases antibiotic and solvent efflux capacities. Implicated in the secretion of the siderophore pyoverdine. This chain is Multidrug resistance protein MexA (mexA), found in Pseudomonas aeruginosa (strain ATCC 15692 / DSM 22644 / CIP 104116 / JCM 14847 / LMG 12228 / 1C / PRS 101 / PAO1).